Reading from the N-terminus, the 78-residue chain is Large ribosomal subunit protein bL28 (78 aa).

Residues 1–31 form a disordered region; sequence MAAHCQVTGAEPGFGHSISHSHRRNKRRFDP.

It belongs to the bacterial ribosomal protein bL28 family.

The sequence is that of Large ribosomal subunit protein bL28 from Pseudarthrobacter chlorophenolicus (strain ATCC 700700 / DSM 12829 / CIP 107037 / JCM 12360 / KCTC 9906 / NCIMB 13794 / A6) (Arthrobacter chlorophenolicus).